A 364-amino-acid polypeptide reads, in one-letter code: UDP-N-acetylglucosamine--N-acetylmuramyl-(pentapeptide) pyrophosphoryl-undecaprenol N-acetylglucosamine transferase (364 aa).

Residues 10–12, N123, S198, I251, and Q296 contribute to the UDP-N-acetyl-alpha-D-glucosamine site; that span reads TGG.

Belongs to the glycosyltransferase 28 family. MurG subfamily.

It is found in the cell membrane. It catalyses the reaction di-trans,octa-cis-undecaprenyl diphospho-N-acetyl-alpha-D-muramoyl-L-alanyl-D-glutamyl-meso-2,6-diaminopimeloyl-D-alanyl-D-alanine + UDP-N-acetyl-alpha-D-glucosamine = di-trans,octa-cis-undecaprenyl diphospho-[N-acetyl-alpha-D-glucosaminyl-(1-&gt;4)]-N-acetyl-alpha-D-muramoyl-L-alanyl-D-glutamyl-meso-2,6-diaminopimeloyl-D-alanyl-D-alanine + UDP + H(+). It functions in the pathway cell wall biogenesis; peptidoglycan biosynthesis. Functionally, cell wall formation. Catalyzes the transfer of a GlcNAc subunit on undecaprenyl-pyrophosphoryl-MurNAc-pentapeptide (lipid intermediate I) to form undecaprenyl-pyrophosphoryl-MurNAc-(pentapeptide)GlcNAc (lipid intermediate II). The chain is UDP-N-acetylglucosamine--N-acetylmuramyl-(pentapeptide) pyrophosphoryl-undecaprenol N-acetylglucosamine transferase from Exiguobacterium sibiricum (strain DSM 17290 / CCUG 55495 / CIP 109462 / JCM 13490 / 255-15).